The chain runs to 106 residues: Large ribosomal subunit protein bL21 (106 aa).

This sequence belongs to the bacterial ribosomal protein bL21 family. As to quaternary structure, part of the 50S ribosomal subunit. Contacts protein L20.

Its function is as follows. This protein binds to 23S rRNA in the presence of protein L20. In Xanthomonas oryzae pv. oryzae (strain MAFF 311018), this protein is Large ribosomal subunit protein bL21.